The following is a 578-amino-acid chain: Membrane protein insertase YidC (578 aa).

The chain crosses the membrane as a helical span at residues 3 to 23 (IQRSILIVALAVVSYLLVLQW). A disordered region spans residues 34–71 (AASASMNTTQGLPDTPSAAGTSSDVPTAQSGAAGSEAA). Polar residues predominate over residues 37-65 (ASMNTTQGLPDTPSAAGTSSDVPTAQSGA). 5 helical membrane-spanning segments follow: residues 361 to 381 (LELTVDYGFLWFIAQPIFWLL), 387 to 407 (LIGNWGWSIIALTVLIKLAFF), 457 to 477 (LGGCLPILVQMPVFLSLYWVL), 500 to 520 (PFFILPIVMGGTMLIQQMLNP), and 535 to 555 (PIIFTFFFLWFPAGLVLYWVV).

It belongs to the OXA1/ALB3/YidC family. Type 1 subfamily. Interacts with the Sec translocase complex via SecD. Specifically interacts with transmembrane segments of nascent integral membrane proteins during membrane integration.

It is found in the cell inner membrane. Its function is as follows. Required for the insertion and/or proper folding and/or complex formation of integral membrane proteins into the membrane. Involved in integration of membrane proteins that insert both dependently and independently of the Sec translocase complex, as well as at least some lipoproteins. Aids folding of multispanning membrane proteins. The polypeptide is Membrane protein insertase YidC (Pseudomonas paraeruginosa (strain DSM 24068 / PA7) (Pseudomonas aeruginosa (strain PA7))).